The following is a 190-amino-acid chain: Threonylcarbamoyl-AMP synthase (190 aa).

The region spanning 7-190 (TGSSAAVVDL…ALTGELFRQG (184 aa)) is the YrdC-like domain.

It belongs to the SUA5 family. TsaC subfamily.

It is found in the cytoplasm. The catalysed reaction is L-threonine + hydrogencarbonate + ATP = L-threonylcarbamoyladenylate + diphosphate + H2O. Its function is as follows. Required for the formation of a threonylcarbamoyl group on adenosine at position 37 (t(6)A37) in tRNAs that read codons beginning with adenine. Catalyzes the conversion of L-threonine, HCO(3)(-)/CO(2) and ATP to give threonylcarbamoyl-AMP (TC-AMP) as the acyladenylate intermediate, with the release of diphosphate. The sequence is that of Threonylcarbamoyl-AMP synthase from Salmonella typhi.